The following is a 964-amino-acid chain: MLRAAVAAAEELRSPLLRVIGTLRDGRGSVLLGRRVRFCSNSSASDTEAAVAEAEAKAEDASAAEGEADSKASSAIVPTSTNIDDCLSVIALPLPHRPLFPGFYMPINVKDQKLLQALIENRKRSAPYAGAFLVKDEEGTDPNIVTGSDSAKSIDDLKGKDLLKRLHEVGTLAQITSIQGDHVVLLGHRRLRITEMVEEDPLTVKVDHLKEKPYNKDDDVMKATSFEVISTLREVLRTSSLWKDHVQTYTQHIGDFNYQRLADFGAAISGANKLLCQEVLEELDVYKRLKLTLELVKKEMEISKLQQSIAKAIEEKISGDQRRYLLNEQLKAIKKELGLETDDKTALSAKFRERIESKKDKCPPHVLQVIEEELTKLQLLEASSSEFSVTRNYLDWLTVLPWGNYSDENFDVHHAQKILDEDHYGLSDVKERILEFIAVGKLRGTSQGKIICLSGPPGVGKTSIGRSIARALNRQFYRFSVGGLADVAEIKGHRRTYVGAMPGKMVQCLKSVGTANPLVLIDEIDKLGKGHSGDPASALLELLDPEQNVNFLDHYLDVPIDLSKVLFVCTANVIEMIPNPLLDRMEIIAIAGYITDEKMHIARDYLEKNTRQACGIKPEQVEVTDTALLALIENYCREAGVRNLQKQIEKIYRKIALQLVRQGVSNEPDHESVSASVTEESGNGDNTTTKDEILKDPAVEDASVTNNVTNPASEEANEENLTSEAAKEDSTSKGNKGTDGAADKAIEKVVVDSSNLGDFVGKPVFQAERIYEHTPVGVVMGLAWTAMGGSTLYIETKKVEEREGKGALVLTGQLGDVMKESAQIAHTVGRAVLLEKEPDNHFFANSKVHLHVPAGSTPKDGPSAGCTMITSMLSLAMGKPVKKDLAMTGEVTLTGRILPIGGVKEKTIAARRSAIKTLIFPAANKRDFDELASNVKEGLEVHFVDTYSEIYDLAFQSDAGTETS.

The Lon N-terminal domain occupies 89–300 (VIALPLPHRP…LTLELVKKEM (212 aa)). Residue 455–462 (GPPGVGKT) coordinates ATP. Positions 663-740 (GVSNEPDHES…TSKGNKGTDG (78 aa)) are disordered. Positions 673–687 (VSASVTEESGNGDNT) are enriched in polar residues. Residues 688–698 (TTKDEILKDPA) are compositionally biased toward basic and acidic residues. Over residues 703–712 (SVTNNVTNPA) the composition is skewed to polar residues. A Lon proteolytic domain is found at 773 to 957 (HTPVGVVMGL…SEIYDLAFQS (185 aa)). Catalysis depends on residues Ser-863 and Lys-906.

This sequence belongs to the peptidase S16 family. In terms of assembly, homoheptamer. Organized in a ring with a central cavity.

The protein localises to the mitochondrion matrix. It catalyses the reaction Hydrolysis of proteins in presence of ATP.. Its function is as follows. ATP-dependent serine protease that mediates the selective degradation of misfolded, unassembled or oxidatively damaged polypeptides as well as certain short-lived regulatory proteins in the mitochondrial matrix. May also have a chaperone function in the assembly of inner membrane protein complexes. Participates in the regulation of mitochondrial gene expression and in the maintenance of the integrity of the mitochondrial genome. Binds to mitochondrial DNA in a site-specific manner. This is Lon protease homolog, mitochondrial (LON2) from Zea mays (Maize).